A 212-amino-acid chain; its full sequence is Protein-L-isoaspartate O-methyltransferase 1 (212 aa).

Ser60 is a catalytic residue.

Belongs to the methyltransferase superfamily. L-isoaspartyl/D-aspartyl protein methyltransferase family.

Its subcellular location is the cytoplasm. The catalysed reaction is [protein]-L-isoaspartate + S-adenosyl-L-methionine = [protein]-L-isoaspartate alpha-methyl ester + S-adenosyl-L-homocysteine. Functionally, catalyzes the methyl esterification of L-isoaspartyl residues in peptides and proteins that result from spontaneous decomposition of normal L-aspartyl and L-asparaginyl residues. It plays a role in the repair and/or degradation of damaged proteins. The protein is Protein-L-isoaspartate O-methyltransferase 1 of Anaeromyxobacter sp. (strain Fw109-5).